Consider the following 223-residue polypeptide: Interleukin-12 subunit alpha (223 aa).

A signal peptide spans Met-1–Ala-23. 4 N-linked (GlcNAc...) asparagine glycosylation sites follow: Asn-41, Asn-79, Asn-121, and Asn-176. 2 cysteine pairs are disulfide-bonded: Cys-66/Cys-200 and Cys-87/Cys-125.

Belongs to the IL-6 superfamily. In terms of assembly, heterodimer with IL12B; disulfide-linked. This heterodimer is known as interleukin IL-12. Heterodimer with EBI3/IL27B; not disulfide-linked. This heterodimer is known as interleukin IL-35. Interacts with NBR1; this interaction promotes IL-12 secretion.

It localises to the secreted. Heterodimerizes with IL12B to form the IL-12 cytokine or with EBI3/IL27B to form the IL-35 cytokine. IL-12 is primarily produced by professional antigen-presenting cells (APCs) such as B-cells and dendritic cells (DCs) as well as macrophages and granulocytes and regulates T-cell and natural killer-cell responses, induces the production of interferon-gamma (IFN-gamma), favors the differentiation of T-helper 1 (Th1) cells and is an important link between innate resistance and adaptive immunity. Mechanistically, exerts its biological effects through a receptor composed of IL12R1 and IL12R2 subunits. Binding to the receptor results in the rapid tyrosine phosphorylation of a number of cellular substrates including the JAK family kinases TYK2 and JAK2. In turn, recruited STAT4 gets phosphorylated and translocates to the nucleus where it regulates cytokine/growth factor responsive genes. As part of IL-35, plays essential roles in maintaining the immune homeostasis of the liver microenvironment and also functions as an immune-suppressive cytokine. Mediates biological events through unconventional receptors composed of IL12RB2 and gp130/IL6ST heterodimers or homodimers. Signaling requires the transcription factors STAT1 and STAT4, which form a unique heterodimer that binds to distinct DNA sites. This chain is Interleukin-12 subunit alpha (IL12A), found in Marmota monax (Woodchuck).